The primary structure comprises 766 residues: DENN domain-containing protein 1B (766 aa).

The region spanning 14–143 (DLVLKVKCHA…YNHPVPKANT (130 aa)) is the uDENN domain. The 137-residue stretch at 160–296 (GLPTIPESRN…VVSALKNKLK (137 aa)) folds into the cDENN domain. One can recognise a dDENN domain in the interval 298–375 (QSTATGDGVA…DGRLAKLNAG (78 aa)). An FXDXF motif motif is present at residues 378–382 (FSDIF). Residues 472–523 (NEKGENREKHKLSQTHLKRPHKSLDGTLYDDDDDDDDIERASKISSEDGEET) are disordered. Basic residues predominate over residues 480-492 (KHKLSQTHLKRPH). The span at 499 to 509 (LYDDDDDDDDI) shows a compositional bias: acidic residues. Tyrosine 500 carries the phosphotyrosine modification. Residues serine 516, serine 517, serine 530, and serine 533 each carry the phosphoserine modification. Residues 547 to 556 (DLLGEILDTL) carry the Clathrin box motif. Disordered stretches follow at residues 611 to 634 (LGQD…VSSG) and 652 to 732 (LCAD…KPSK). Phosphoserine is present on residues serine 632 and serine 633. Polar residues predominate over residues 694 to 704 (TPGQAPLQSED). Positions 722 to 732 (KAGKEDTKPSK) are enriched in basic and acidic residues.

Interacts with RAB35. Interacts with clathrin heavy chain/CLTC. Interacts with components of the adapter protein complex 2 (AP-2) AP2A2 and AP2B1. Interacts with CD3E. Phosphorylated on serine and/or threonine, possibly regulating the guanine nucleotide exchange factor (GEF) activity. Expressed in a subset of dendritic cells (DCs).

It is found in the cytoplasm. Its subcellular location is the cytosol. The protein localises to the cytoplasmic vesicle. The protein resides in the clathrin-coated vesicle. Functionally, guanine nucleotide exchange factor (GEF) for RAB35 that acts as a regulator of T-cell receptor (TCR) internalization in TH2 cells. Acts by promoting the exchange of GDP to GTP, converting inactive GDP-bound RAB35 into its active GTP-bound form. Plays a role in clathrin-mediated endocytosis. Controls cytokine production in TH2 lymphocytes by controlling the rate of TCR internalization and routing to endosomes: acts by mediating clathrin-mediated endocytosis of TCR via its interaction with the adapter protein complex 2 (AP-2) and GEF activity. Dysregulation leads to impaired TCR down-modulation and recycling, affecting cytokine production in TH2 cells. This Mus musculus (Mouse) protein is DENN domain-containing protein 1B.